Reading from the N-terminus, the 519-residue chain is 3-octaprenyl-4-hydroxybenzoate carboxy-lyase (519 aa).

Asparagine 177 contributes to the Mn(2+) binding site. Prenylated FMN-binding positions include 180–182 (IYR), 194–196 (RWL), and 199–200 (RG). Residue glutamate 243 participates in Mn(2+) binding. The active-site Proton donor is aspartate 318.

It belongs to the UbiD family. As to quaternary structure, homohexamer. The cofactor is prenylated FMN. Mn(2+) serves as cofactor.

The protein resides in the cell membrane. The enzyme catalyses a 4-hydroxy-3-(all-trans-polyprenyl)benzoate + H(+) = a 2-(all-trans-polyprenyl)phenol + CO2. It functions in the pathway cofactor biosynthesis; ubiquinone biosynthesis. In terms of biological role, catalyzes the decarboxylation of 3-octaprenyl-4-hydroxy benzoate to 2-octaprenylphenol, an intermediate step in ubiquinone biosynthesis. The sequence is that of 3-octaprenyl-4-hydroxybenzoate carboxy-lyase from Burkholderia thailandensis (strain ATCC 700388 / DSM 13276 / CCUG 48851 / CIP 106301 / E264).